Here is a 242-residue protein sequence, read N- to C-terminus: NAD(P)H-hydrate epimerase (242 aa).

Residues 11–221 (AKALDAELMS…KVITKKFNLS (211 aa)) enclose the YjeF N-terminal domain. 61-65 (NNGGD) contacts (6S)-NADPHX. Positions 62 and 128 each coordinate K(+). (6S)-NADPHX contacts are provided by residues 132–138 (GFSFKGP) and D161. S164 is a binding site for K(+).

The protein belongs to the NnrE/AIBP family. K(+) serves as cofactor.

It is found in the cytoplasm. The protein localises to the mitochondrion. The protein resides in the nucleus. The enzyme catalyses (6R)-NADHX = (6S)-NADHX. The catalysed reaction is (6R)-NADPHX = (6S)-NADPHX. In terms of biological role, catalyzes the epimerization of the S- and R-forms of NAD(P)HX, a damaged form of NAD(P)H that is a result of enzymatic or heat-dependent hydration. This is a prerequisite for the S-specific NAD(P)H-hydrate dehydratase to allow the repair of both epimers of NAD(P)HX. May have a role in meiosis. The protein is NAD(P)H-hydrate epimerase (mug182) of Schizosaccharomyces pombe (strain 972 / ATCC 24843) (Fission yeast).